We begin with the raw amino-acid sequence, 64 residues long: Cytochrome c oxidase subunit 5C-2 (64 aa).

A helical transmembrane segment spans residues 15-34 (SVVKELIIGLTLGLAAGGLW).

It belongs to the cytochrome c oxidase subunit 5C family.

The protein resides in the mitochondrion inner membrane. In terms of biological role, this protein is one of the nuclear-coded polypeptide chains of cytochrome c oxidase, the terminal oxidase in mitochondrial electron transport. This is Cytochrome c oxidase subunit 5C-2 from Arabidopsis thaliana (Mouse-ear cress).